Here is a 459-residue protein sequence, read N- to C-terminus: Cysteine--tRNA ligase (459 aa).

C28 lines the Zn(2+) pocket. A 'HIGH' region motif is present at residues 30-40 (VTVYDLCHIGH). Zn(2+) contacts are provided by C209, H234, and E238. Residues 266 to 270 (KMSKS) carry the 'KMSKS' region motif. K269 is an ATP binding site.

It belongs to the class-I aminoacyl-tRNA synthetase family. Monomer. Zn(2+) serves as cofactor.

It localises to the cytoplasm. The catalysed reaction is tRNA(Cys) + L-cysteine + ATP = L-cysteinyl-tRNA(Cys) + AMP + diphosphate. This is Cysteine--tRNA ligase from Haemophilus influenzae (strain PittGG).